Consider the following 466-residue polypeptide: Glutamate decarboxylase alpha (466 aa).

Positions 62 and 83 each coordinate substrate. Pyridoxal 5'-phosphate is bound by residues Ser-126–Ser-127, Thr-212, and His-275. N6-(pyridoxal phosphate)lysine is present on Lys-276.

It belongs to the group II decarboxylase family. Homohexamer. Pyridoxal 5'-phosphate serves as cofactor.

The enzyme catalyses L-glutamate + H(+) = 4-aminobutanoate + CO2. Functionally, converts glutamate to gamma-aminobutyrate (GABA), consuming one intracellular proton in the reaction. The gad system helps to maintain a near-neutral intracellular pH when cells are exposed to extremely acidic conditions. The ability to survive transit through the acidic conditions of the stomach is essential for successful colonization of the mammalian host by commensal and pathogenic bacteria. The sequence is that of Glutamate decarboxylase alpha (gadA) from Shigella flexneri.